The sequence spans 97 residues: Protein RnfH (97 aa).

The protein belongs to the UPF0125 (RnfH) family.

The sequence is that of Protein RnfH from Aliivibrio salmonicida (strain LFI1238) (Vibrio salmonicida (strain LFI1238)).